The following is a 315-amino-acid chain: Glutaminase (315 aa).

The substrate site is built by Ser-70, Asn-120, Glu-166, Asn-173, Tyr-197, Tyr-249, and Val-267.

The protein belongs to the glutaminase family. In terms of assembly, homotetramer.

The enzyme catalyses L-glutamine + H2O = L-glutamate + NH4(+). The protein is Glutaminase of Mesorhizobium japonicum (strain LMG 29417 / CECT 9101 / MAFF 303099) (Mesorhizobium loti (strain MAFF 303099)).